Reading from the N-terminus, the 404-residue chain is S-adenosylmethionine synthase (404 aa).

Residue His18 coordinates ATP. Position 20 (Asp20) interacts with Mg(2+). A K(+)-binding site is contributed by Glu46. 2 residues coordinate L-methionine: Glu59 and Gln102. Residues 102-112 (QSPEIAQGVDH) are flexible loop. Residues 178 to 180 (DGK), 249 to 250 (KF), Asp258, 264 to 265 (RK), Ala281, and Lys285 contribute to the ATP site. Asp258 serves as a coordination point for L-methionine. L-methionine is bound at residue Lys289.

It belongs to the AdoMet synthase family. Homotetramer; dimer of dimers. The cofactor is Mg(2+). K(+) serves as cofactor.

It is found in the cytoplasm. It carries out the reaction L-methionine + ATP + H2O = S-adenosyl-L-methionine + phosphate + diphosphate. It functions in the pathway amino-acid biosynthesis; S-adenosyl-L-methionine biosynthesis; S-adenosyl-L-methionine from L-methionine: step 1/1. Functionally, catalyzes the formation of S-adenosylmethionine (AdoMet) from methionine and ATP. The overall synthetic reaction is composed of two sequential steps, AdoMet formation and the subsequent tripolyphosphate hydrolysis which occurs prior to release of AdoMet from the enzyme. This chain is S-adenosylmethionine synthase, found in Rhodococcus jostii (strain RHA1).